Reading from the N-terminus, the 266-residue chain is uncharacterized protein (266 aa).

Positions 1–22 (MGYLKRLVLYIVIMVMSVFIIG) are cleaved as a signal peptide. The N-palmitoyl cysteine moiety is linked to residue Cys-23. A lipid anchor (S-diacylglycerol cysteine) is attached at Cys-23.

This sequence belongs to the staphylococcal tandem lipoprotein family.

It is found in the cell membrane. This is an uncharacterized protein from Staphylococcus aureus (strain USA300).